A 196-amino-acid chain; its full sequence is Peptidyl-tRNA hydrolase (196 aa).

Tyr-17 serves as a coordination point for tRNA. Residue His-22 is the Proton acceptor of the active site. TRNA-binding residues include Tyr-69, Asn-71, and Asn-117.

It belongs to the PTH family. As to quaternary structure, monomer.

The protein resides in the cytoplasm. The catalysed reaction is an N-acyl-L-alpha-aminoacyl-tRNA + H2O = an N-acyl-L-amino acid + a tRNA + H(+). Its function is as follows. Hydrolyzes ribosome-free peptidyl-tRNAs (with 1 or more amino acids incorporated), which drop off the ribosome during protein synthesis, or as a result of ribosome stalling. In terms of biological role, catalyzes the release of premature peptidyl moieties from peptidyl-tRNA molecules trapped in stalled 50S ribosomal subunits, and thus maintains levels of free tRNAs and 50S ribosomes. In Pseudarthrobacter chlorophenolicus (strain ATCC 700700 / DSM 12829 / CIP 107037 / JCM 12360 / KCTC 9906 / NCIMB 13794 / A6) (Arthrobacter chlorophenolicus), this protein is Peptidyl-tRNA hydrolase.